A 434-amino-acid chain; its full sequence is Maltoporin (434 aa).

The first 25 residues, 1 to 25 (MKMKAKWLPIAAAVTAALASQAAFA), serve as a signal peptide directing secretion.

Belongs to the porin LamB (TC 1.B.3) family. In terms of assembly, homotrimer formed of three 18-stranded antiparallel beta-barrels, containing three independent channels.

Its subcellular location is the cell outer membrane. The catalysed reaction is beta-maltose(in) = beta-maltose(out). In terms of biological role, involved in the transport of maltose and maltodextrins. The chain is Maltoporin from Aeromonas hydrophila.